The sequence spans 96 residues: Salivary protein FS50 (96 aa).

The signal sequence occupies residues 1 to 19 (MKWILVLALVCLAVEYSYS). 4 cysteine pairs are disulfide-bonded: Cys26–Cys71, Cys50–Cys78, Cys63–Cys91, and Cys67–Cys93.

The protein resides in the secreted. Salivary protein that inhibits host voltage-gated sodium channel Nav1.5/SCN5A. This chain is Salivary protein FS50, found in Xenopsylla cheopis (Oriental rat flea).